A 471-amino-acid chain; its full sequence is Tripartite motif-containing protein 60 (471 aa).

The RING-type zinc finger occupies 16–57; that stretch reads CPICLEYLKDPVTINCGHNFCRSCLSVSWKDLDDTFPCPVCR. Residues 92–133 form a B box-type zinc finger; it reads KENAMCEKHNQFLTLFCVKDLEILCTQCSFSTKHQKHYICPI. Zn(2+) is bound by residues Cys-97, His-100, Cys-119, and His-125. Positions 171-223 form a coiled coil; the sequence is ELKKKVEYKREEINSEFEQIRLFLQNEQEMILRQIQDEEMNILAKLNENLVEL. A B30.2/SPRY domain is found at 277–470; sequence FSLPPQYSGL…LKICSVSDSE (194 aa).

The protein belongs to the TRIM/RBCC family.

In terms of biological role, E3 SUMO-protein ligase that mediates SUMOylation of TAB2 leading to inhibition of NF-kappa-B and MAPK pathways by suppressing the TRAF6/TAB2/TAK1 complex. In Homo sapiens (Human), this protein is Tripartite motif-containing protein 60 (TRIM60).